The following is a 237-amino-acid chain: Probable transcriptional regulatory protein NIS_0560 (237 aa).

It belongs to the TACO1 family.

It is found in the cytoplasm. The protein is Probable transcriptional regulatory protein NIS_0560 of Nitratiruptor sp. (strain SB155-2).